Consider the following 525-residue polypeptide: GMP synthase [glutamine-hydrolyzing] (525 aa).

In terms of domain architecture, Glutamine amidotransferase type-1 spans 9-207 (RILILDFGSQ…VLQLCACEKL (199 aa)). Cys-86 acts as the Nucleophile in catalysis. Active-site residues include His-181 and Glu-183. The region spanning 208–400 (WTPANIVEDA…LGLPYDMVYR (193 aa)) is the GMPS ATP-PPase domain. Position 235 to 241 (235 to 241 (SGGVDSS)) interacts with ATP.

In terms of assembly, homodimer.

It catalyses the reaction XMP + L-glutamine + ATP + H2O = GMP + L-glutamate + AMP + diphosphate + 2 H(+). The protein operates within purine metabolism; GMP biosynthesis; GMP from XMP (L-Gln route): step 1/1. Catalyzes the synthesis of GMP from XMP. The protein is GMP synthase [glutamine-hydrolyzing] of Cellvibrio japonicus (strain Ueda107) (Pseudomonas fluorescens subsp. cellulosa).